Reading from the N-terminus, the 645-residue chain is Threonine--tRNA ligase (645 aa).

The region spanning 1–63 (MDQIKIKFPD…ESDGDIEIVT (63 aa)) is the TGS domain. The tract at residues 242 to 540 (DHRKIGKELE…LTEETKGAFP (299 aa)) is catalytic. Zn(2+)-binding residues include C336, H387, and H517.

The protein belongs to the class-II aminoacyl-tRNA synthetase family. Homodimer. The cofactor is Zn(2+).

It localises to the cytoplasm. It carries out the reaction tRNA(Thr) + L-threonine + ATP = L-threonyl-tRNA(Thr) + AMP + diphosphate + H(+). Catalyzes the attachment of threonine to tRNA(Thr) in a two-step reaction: L-threonine is first activated by ATP to form Thr-AMP and then transferred to the acceptor end of tRNA(Thr). Also edits incorrectly charged L-seryl-tRNA(Thr). The chain is Threonine--tRNA ligase from Staphylococcus saprophyticus subsp. saprophyticus (strain ATCC 15305 / DSM 20229 / NCIMB 8711 / NCTC 7292 / S-41).